The following is a 250-amino-acid chain: Proteasome subunit alpha (250 aa).

It belongs to the peptidase T1A family. As to quaternary structure, the 20S proteasome core is composed of 14 alpha and 14 beta subunits that assemble into four stacked heptameric rings, resulting in a barrel-shaped structure. The two inner rings, each composed of seven catalytic beta subunits, are sandwiched by two outer rings, each composed of seven alpha subunits. The catalytic chamber with the active sites is on the inside of the barrel. Has a gated structure, the ends of the cylinder being occluded by the N-termini of the alpha-subunits. Is capped at one or both ends by the proteasome regulatory ATPase, PAN.

The protein localises to the cytoplasm. The formation of the proteasomal ATPase PAN-20S proteasome complex, via the docking of the C-termini of PAN into the intersubunit pockets in the alpha-rings, triggers opening of the gate for substrate entry. Interconversion between the open-gate and close-gate conformations leads to a dynamic regulation of the 20S proteasome proteolysis activity. In terms of biological role, component of the proteasome core, a large protease complex with broad specificity involved in protein degradation. The sequence is that of Proteasome subunit alpha from Methanobrevibacter smithii (strain ATCC 35061 / DSM 861 / OCM 144 / PS).